Consider the following 1326-residue polypeptide: Paired amphipathic helix protein Sin3-like 4 (1326 aa).

3 PAH domains span residues 8 to 78 (QKLT…LPKG), 95 to 165 (KPVE…LPDT), and 292 to 367 (IPSS…LAQC). Disordered stretches follow at residues 272–299 (DDDS…STYD), 715–812 (VPSR…RAET), 844–864 (SVAG…TEEL), and 927–1000 (SKSK…EGDM). Residues 721–737 (GAEDREDAVKSTNHDRE) show a composition bias toward basic and acidic residues. Polar residues-rich tracts occupy residues 744–757 (SPQN…SMRS), 781–805 (SSKT…NLTT), 844–861 (SVAG…TSGT), and 942–961 (PRSS…SGTD). Over residues 967–981 (DCYREDDIDHNKVES) the composition is skewed to basic and acidic residues.

The protein localises to the nucleus. Acts as a transcriptional repressor. Plays roles in regulating gene expression and genome stability. The polypeptide is Paired amphipathic helix protein Sin3-like 4 (SNL4) (Arabidopsis thaliana (Mouse-ear cress)).